The sequence spans 372 residues: Queuine tRNA-ribosyltransferase (372 aa).

The active-site Proton acceptor is Asp89. Substrate-binding positions include 89-93 (DSGGF), Asp161, and Gly232. The interval 262-268 (GIGDLPS) is RNA binding. Asp281 acts as the Nucleophile in catalysis. Residues 286–290 (TKAAR) are RNA binding; important for wobble base 34 recognition. Zn(2+) contacts are provided by Cys319, Cys321, Cys324, and His351.

This sequence belongs to the queuine tRNA-ribosyltransferase family. In terms of assembly, homodimer. Within each dimer, one monomer is responsible for RNA recognition and catalysis, while the other monomer binds to the replacement base PreQ1. Requires Zn(2+) as cofactor.

It catalyses the reaction 7-aminomethyl-7-carbaguanine + guanosine(34) in tRNA = 7-aminomethyl-7-carbaguanosine(34) in tRNA + guanine. It functions in the pathway tRNA modification; tRNA-queuosine biosynthesis. Functionally, catalyzes the base-exchange of a guanine (G) residue with the queuine precursor 7-aminomethyl-7-deazaguanine (PreQ1) at position 34 (anticodon wobble position) in tRNAs with GU(N) anticodons (tRNA-Asp, -Asn, -His and -Tyr). Catalysis occurs through a double-displacement mechanism. The nucleophile active site attacks the C1' of nucleotide 34 to detach the guanine base from the RNA, forming a covalent enzyme-RNA intermediate. The proton acceptor active site deprotonates the incoming PreQ1, allowing a nucleophilic attack on the C1' of the ribose to form the product. After dissociation, two additional enzymatic reactions on the tRNA convert PreQ1 to queuine (Q), resulting in the hypermodified nucleoside queuosine (7-(((4,5-cis-dihydroxy-2-cyclopenten-1-yl)amino)methyl)-7-deazaguanosine). This chain is Queuine tRNA-ribosyltransferase, found in Chlamydia abortus (strain DSM 27085 / S26/3) (Chlamydophila abortus).